A 423-amino-acid chain; its full sequence is UDP-N-acetylgalactosamine-undecaprenyl-phosphate N-acetylgalactosaminephosphotransferase (423 aa).

Residues 1–13 (MSYQRRHSRWYER) are Extracellular-facing. A helical membrane pass occupies residues 14-34 (VLFSPPSLFFLGAMLAVCLPA). Residues 35-47 (LERWGWGFWEYFD) lie on the Cytoplasmic side of the membrane. Residues 48–68 (AVRVNTLGGAFVAFLLTGIVL) form a helical membrane-spanning segment. Over 69–79 (YRFLRYPGASP) the chain is Extracellular. The helical transmembrane segment at 80–100 (VAYMIPTVTTLYGSLVGALFF) threads the bilayer. At 101–107 (LRLPYSR) the chain is on the cytoplasmic side. A helical membrane pass occupies residues 108–128 (QVLFESYVVALLCCWVVYFIG). At 129 to 239 (RRYRTPKYAL…IYAFIKRGMD (111 aa)) the chain is on the extracellular side. The helical transmembrane segment at 240 to 260 (ILAAVIAIPLFSPLMLATAVL) threads the bilayer. Topologically, residues 261 to 423 (IKLESPGPVM…RTILTGFGAR (163 aa)) are cytoplasmic.

This sequence belongs to the bacterial sugar transferase family.

It localises to the membrane. The catalysed reaction is di-trans,octa-cis-undecaprenyl phosphate + UDP-N-acetyl-alpha-D-galactosamine = N-acetyl-alpha-D-galactosaminyl-di-trans,octa-cis-undecaprenyl diphosphate + UMP. The protein operates within bacterial outer membrane biogenesis; LPS O-antigen biosynthesis. Transfers N-acetyl-galactosamine (GalNAc) to undecaprenyl phosphate, a step in the assembly of the repeating-unit of the O-antigen. Shows no activity with UDP-N-acetyl-alpha-D-glucosamine. The polypeptide is UDP-N-acetylgalactosamine-undecaprenyl-phosphate N-acetylgalactosaminephosphotransferase (wecA) (Aeromonas hydrophila).